The primary structure comprises 352 residues: Galactokinase (352 aa).

17–20 (EHTD) serves as a coordination point for substrate. Residues serine 49 and 101-107 (GAGLSSS) each bind ATP. Mg(2+) contacts are provided by serine 107 and glutamate 139. Aspartate 151 serves as the catalytic Proton acceptor. Position 200 (tyrosine 200) interacts with substrate.

This sequence belongs to the GHMP kinase family. GalK subfamily. Monomer.

The protein resides in the cytoplasm. The catalysed reaction is alpha-D-galactose + ATP = alpha-D-galactose 1-phosphate + ADP + H(+). The protein operates within carbohydrate metabolism; galactose metabolism. In terms of biological role, catalyzes the transfer of the gamma-phosphate of ATP to D-galactose to form alpha-D-galactose-1-phosphate (Gal-1-P). Is very specific for its substrate, since it is not able to use D-glucose, D-fructose, D-mannose, 2-deoxy-D-glucose, and D-glucosamine as substrates. The protein is Galactokinase of Pyrococcus furiosus (strain ATCC 43587 / DSM 3638 / JCM 8422 / Vc1).